We begin with the raw amino-acid sequence, 83 residues long: Cytochrome b559 subunit alpha (83 aa).

The helical transmembrane segment at 21–35 (VIHSITIPSLFIAGW) threads the bilayer. Heme is bound at residue H23.

This sequence belongs to the PsbE/PsbF family. As to quaternary structure, heterodimer of an alpha subunit and a beta subunit. PSII is composed of 1 copy each of membrane proteins PsbA, PsbB, PsbC, PsbD, PsbE, PsbF, PsbH, PsbI, PsbJ, PsbK, PsbL, PsbM, PsbT, PsbX, PsbY, PsbZ, Psb30/Ycf12, at least 3 peripheral proteins of the oxygen-evolving complex and a large number of cofactors. It forms dimeric complexes. Heme b serves as cofactor.

Its subcellular location is the plastid. The protein localises to the chloroplast thylakoid membrane. Its function is as follows. This b-type cytochrome is tightly associated with the reaction center of photosystem II (PSII). PSII is a light-driven water:plastoquinone oxidoreductase that uses light energy to abstract electrons from H(2)O, generating O(2) and a proton gradient subsequently used for ATP formation. It consists of a core antenna complex that captures photons, and an electron transfer chain that converts photonic excitation into a charge separation. The sequence is that of Cytochrome b559 subunit alpha from Oenothera berteroana (Bertero's evening primrose).